Reading from the N-terminus, the 284-residue chain is Serine protease 57 (284 aa).

An N-terminal signal peptide occupies residues 1 to 35 (MPSSTAMVPGTRGGWHCLVLTTAAALTQLMWLPGC). In terms of domain architecture, Peptidase S1 spans 40–269 (IVGGHEVTPH…FVTWIWDVVR (230 aa)). Cys65 and Cys81 are joined by a disulfide. Residues His80 and Asp128 each act as charge relay system in the active site. Asn135 carries an N-linked (GlcNAc...) asparagine glycan. 3 disulfides stabilise this stretch: Cys163/Cys230, Cys194/Cys208, and Cys220/Cys245. The Charge relay system role is filled by Ser224.

It belongs to the peptidase S1 family. After cleavage of the signal peptide, the N-terminus is probably further processed by CTSC. Processing by CTSC is probably required for accumulation in cytoplasmic granules; in the absence of CTSC the protein does not accumulate. Post-translationally, N-glycosylated.

Its subcellular location is the cytoplasmic granule lumen. It is found in the secreted. Serine protease that cleaves preferentially after Arg residues. Can also cleave after citrulline (deimidated arginine) and methylarginine residues. This chain is Serine protease 57 (Prss57), found in Mus musculus (Mouse).